We begin with the raw amino-acid sequence, 217 residues long: Polyadenylate-binding protein 3 (217 aa).

Residues 1 to 28 form a disordered region; it reads MEEEEHEVYGGEIPEVGDTDVPDPDIDM. Positions 15–28 are enriched in acidic residues; sequence EVGDTDVPDPDIDM. The stretch at 30–71 forms a coiled coil; the sequence is AADEDAVTELAEMKRRLKEMEEEAAALREMQAKVEKEMGATQ. A necessary for homooligomerization region spans residues 75 to 216; sequence SMAANQEGKE…FRRPMRYMPY (142 aa). The RRM domain maps to 89–165; sequence RSVYVGNVDY…RQLKVSPKRT (77 aa). The short motif at 162-169 is the Nuclear localization signal element; it reads PKRTNVPG.

In terms of assembly, monomer and homooligomer. Binds RNA as a monomer and oligomerizes when bound to poly(A). Forms a complex with cleavage and polyadenylation specificity factor (CPSF) subunits PAPS4, PABN1, PABN2, CSTF50 and FIPS5. Interacts with CSP3.

The protein localises to the nucleus speckle. Its subcellular location is the cytoplasm. Functionally, involved in the 3'-end formation of mRNA precursors (pre-mRNA) by the addition of a poly(A) tail of 200-250 nt to the upstream cleavage product. Stimulates poly(A) polymerase (PAPOLA) conferring processivity on the poly(A) tail elongation reaction and also controls the poly(A) tail length. Increases the affinity of poly(A) polymerase for RNA. Binds to poly(A) and to poly(G) with high affinity. May protect the poly(A) tail from degradation. The protein is Polyadenylate-binding protein 3 of Arabidopsis thaliana (Mouse-ear cress).